Reading from the N-terminus, the 338-residue chain is CDP-paratose 2-epimerase (338 aa).

Residue Thr124 participates in substrate binding. Tyr164 serves as the catalytic Proton acceptor.

Belongs to the NAD(P)-dependent epimerase/dehydratase family. In terms of assembly, homotetramer. The cofactor is NAD(+).

It carries out the reaction CDP-alpha-D-paratose = CDP-3,6-dideoxy-alpha-D-mannose. It functions in the pathway nucleotide-sugar biosynthesis; CDP-3,6-dideoxy-D-mannose biosynthesis; CDP-3,6-dideoxy-D-mannose from CTP and alpha-D-glucose 1-phosphate: step 5/5. Its function is as follows. Catalyzes the isomeration of CDP-paratose to CDP-tyvelose. The polypeptide is CDP-paratose 2-epimerase (rfbE) (Salmonella typhi).